Reading from the N-terminus, the 235-residue chain is Glycerol-3-phosphate acyltransferase (235 aa).

6 helical membrane-spanning segments follow: residues 4–24 (LLAI…IMAG), 56–76 (TVTL…VAFF), 94–114 (LLAG…GFKG), 124–144 (MLIG…LLTI), 152–172 (VASM…KYIF), and 191–211 (FHDS…LGIL).

It belongs to the PlsY family. Probably interacts with PlsX.

The protein localises to the cell inner membrane. The enzyme catalyses an acyl phosphate + sn-glycerol 3-phosphate = a 1-acyl-sn-glycero-3-phosphate + phosphate. It functions in the pathway lipid metabolism; phospholipid metabolism. Functionally, catalyzes the transfer of an acyl group from acyl-phosphate (acyl-PO(4)) to glycerol-3-phosphate (G3P) to form lysophosphatidic acid (LPA). This enzyme utilizes acyl-phosphate as fatty acyl donor, but not acyl-CoA or acyl-ACP. In Chlorobium limicola (strain DSM 245 / NBRC 103803 / 6330), this protein is Glycerol-3-phosphate acyltransferase.